The sequence spans 338 residues: Endonuclease V (338 aa).

Residues Asp-52 and Asp-126 each contribute to the Mg(2+) site. The tract at residues Gln-253–Pro-338 is disordered. Composition is skewed to basic and acidic residues over residues Gln-260–Arg-270 and Arg-287–Asp-323. Pro residues predominate over residues Pro-328–Pro-338.

Belongs to the endonuclease V family. Monomer. Interacts with PABPC1; the interaction is RNA-dependent and stimulates ENDOV activity. The cofactor is Mg(2+). Highest levels detected in liver with high levels also found in heart, kidney and testis. Expressed at low levels in brain.

It is found in the cytoplasm. It localises to the nucleus. Its subcellular location is the nucleolus. The protein localises to the stress granule. Functionally, endoribonuclease that specifically cleaves inosine-containing RNAs: cleaves RNA at the second phosphodiester bond 3' to inosine. Active against both single-stranded and double-stranded RNAs. Has strong preference for single-stranded RNAs (ssRNAs) toward double-stranded RNAs (dsRNAs). Cleaves mRNAs and tRNAs containing inosine. Also able to cleave structure-specific dsRNA substrates containing the specific sites 5'-IIUI-3' and 5'-UIUU-3'. Inosine is present in a number of RNAs following editing; the function of inosine-specific endoribonuclease is still unclear: it could either play a regulatory role in edited RNAs, or be involved in antiviral response by removing the hyperedited long viral dsRNA genome that has undergone A-to-I editing. Binds branched DNA structures. The sequence is that of Endonuclease V (Endov) from Mus musculus (Mouse).